Here is a 345-residue protein sequence, read N- to C-terminus: Phosphate acyltransferase (345 aa).

This sequence belongs to the PlsX family. Homodimer. Probably interacts with PlsY.

It is found in the cytoplasm. It carries out the reaction a fatty acyl-[ACP] + phosphate = an acyl phosphate + holo-[ACP]. It functions in the pathway lipid metabolism; phospholipid metabolism. Its function is as follows. Catalyzes the reversible formation of acyl-phosphate (acyl-PO(4)) from acyl-[acyl-carrier-protein] (acyl-ACP). This enzyme utilizes acyl-ACP as fatty acyl donor, but not acyl-CoA. This chain is Phosphate acyltransferase, found in Limosilactobacillus fermentum (strain NBRC 3956 / LMG 18251) (Lactobacillus fermentum).